The chain runs to 110 residues: Large ribosomal subunit protein uL22 (110 aa).

It belongs to the universal ribosomal protein uL22 family. Part of the 50S ribosomal subunit.

Functionally, this protein binds specifically to 23S rRNA; its binding is stimulated by other ribosomal proteins, e.g. L4, L17, and L20. It is important during the early stages of 50S assembly. It makes multiple contacts with different domains of the 23S rRNA in the assembled 50S subunit and ribosome. The globular domain of the protein is located near the polypeptide exit tunnel on the outside of the subunit, while an extended beta-hairpin is found that lines the wall of the exit tunnel in the center of the 70S ribosome. This Baumannia cicadellinicola subsp. Homalodisca coagulata protein is Large ribosomal subunit protein uL22.